The primary structure comprises 117 residues: UPF0344 protein GWCH70_0687 (117 aa).

The next 4 membrane-spanning stretches (helical) occupy residues 2–22 (THAHITSWLITVILFFIAVSL), 32–52 (IVQMALRLFYIFTVITGGLLL), 55–75 (IASISILYIIKAIVGLWLIGA), and 97–117 (IVAFVLVLFLGFMLPLGFDLF).

This sequence belongs to the UPF0344 family.

Its subcellular location is the cell membrane. The protein is UPF0344 protein GWCH70_0687 of Geobacillus sp. (strain WCH70).